We begin with the raw amino-acid sequence, 455 residues long: Probable 1,4-beta-D-glucan cellobiohydrolase A (455 aa).

A signal peptide spans 1-17 (MHQRALLFSAFWTAVQA). An N-linked (GlcNAc...) asparagine glycan is attached at Asn-81. Glu-227 acts as the Nucleophile in catalysis. The active-site Proton donor is Glu-232. Asn-285 carries N-linked (GlcNAc...) asparagine glycosylation.

The protein belongs to the glycosyl hydrolase 7 (cellulase C) family.

Its subcellular location is the secreted. The enzyme catalyses Hydrolysis of (1-&gt;4)-beta-D-glucosidic linkages in cellulose and cellotetraose, releasing cellobiose from the non-reducing ends of the chains.. Functionally, the biological conversion of cellulose to glucose generally requires three types of hydrolytic enzymes: (1) Endoglucanases which cut internal beta-1,4-glucosidic bonds; (2) Exocellobiohydrolases that cut the disaccharide cellobiose from the non-reducing end of the cellulose polymer chain; (3) Beta-1,4-glucosidases which hydrolyze the cellobiose and other short cello-oligosaccharides to glucose. This chain is Probable 1,4-beta-D-glucan cellobiohydrolase A (cbhA), found in Aspergillus flavus (strain ATCC 200026 / FGSC A1120 / IAM 13836 / NRRL 3357 / JCM 12722 / SRRC 167).